A 387-amino-acid polypeptide reads, in one-letter code: tRNA pseudouridine synthase B (387 aa).

Residue Asp-43 is the Nucleophile of the active site.

This sequence belongs to the pseudouridine synthase TruB family. Type 1 subfamily.

It carries out the reaction uridine(55) in tRNA = pseudouridine(55) in tRNA. Responsible for synthesis of pseudouridine from uracil-55 in the psi GC loop of transfer RNAs. The chain is tRNA pseudouridine synthase B from Bifidobacterium longum (strain DJO10A).